The chain runs to 471 residues: Probable ribonuclease FAU-1 (471 aa).

The protein belongs to the FAU-1 family.

In terms of biological role, probable RNase involved in rRNA stability through maturation and/or degradation of precursor rRNAs. Binds to RNA in loop regions with AU-rich sequences. This Caldivirga maquilingensis (strain ATCC 700844 / DSM 13496 / JCM 10307 / IC-167) protein is Probable ribonuclease FAU-1.